A 239-amino-acid polypeptide reads, in one-letter code: Tetraspanin-9 (239 aa).

The Cytoplasmic segment spans residues 1–13; sequence MARGCLCCLKYMM. A helical membrane pass occupies residues 14 to 34; sequence FLFNLIFWLCGCGLLGVGIWL. Residues 35–55 lie on the Extracellular side of the membrane; it reads SVSQGNFATFSPSFPSLSAAN. A helical transmembrane segment spans residues 56-76; that stretch reads LVIAIGTIVMVTGFLGCLGAI. Residues 77 to 85 are Cytoplasmic-facing; the sequence is KENKCLLLS. The chain crosses the membrane as a helical span at residues 86–106; the sequence is FFIILLIILLAELILLILFFV. Topologically, residues 107-203 are extracellular; sequence YMDKVNENAK…VKMWFDDNKH (97 aa). Asparagine 180 carries an N-linked (GlcNAc...) asparagine glycan. Residues 204–224 traverse the membrane as a helical segment; sequence VLGTIGMCILIIQILGMAFSM. The Cytoplasmic segment spans residues 225–239; that stretch reads TLFQQIHRTGKKYDA.

The protein belongs to the tetraspanin (TM4SF) family.

The protein localises to the membrane. The chain is Tetraspanin-9 (tspan9) from Xenopus tropicalis (Western clawed frog).